The primary structure comprises 60 residues: Large ribosomal subunit protein uL30 (60 aa).

It belongs to the universal ribosomal protein uL30 family. As to quaternary structure, part of the 50S ribosomal subunit.

In Streptococcus pneumoniae serotype 2 (strain D39 / NCTC 7466), this protein is Large ribosomal subunit protein uL30.